A 208-amino-acid chain; its full sequence is Small ribosomal subunit protein eS8 (208 aa).

Positions 1–34 (MGISRDHWHKRRATGGKRAPIRKKRKYELGRPAA) are disordered. Residues 7–26 (HWHKRRATGGKRAPIRKKRK) are compositionally biased toward basic residues.

Belongs to the eukaryotic ribosomal protein eS8 family. As to quaternary structure, component of the small ribosomal subunit. Identified in a IGF2BP1-dependent mRNP granule complex containing untranslated mRNAs. Part of the small subunit (SSU) processome, composed of more than 70 proteins and the RNA chaperone small nucleolar RNA (snoRNA) U3.

It localises to the cytoplasm. It is found in the membrane. The protein localises to the nucleus. Its subcellular location is the nucleolus. Functionally, component of the small ribosomal subunit. The ribosome is a large ribonucleoprotein complex responsible for the synthesis of proteins in the cell. Part of the small subunit (SSU) processome, first precursor of the small eukaryotic ribosomal subunit. During the assembly of the SSU processome in the nucleolus, many ribosome biogenesis factors, an RNA chaperone and ribosomal proteins associate with the nascent pre-rRNA and work in concert to generate RNA folding, modifications, rearrangements and cleavage as well as targeted degradation of pre-ribosomal RNA by the RNA exosome. This chain is Small ribosomal subunit protein eS8 (RpS8), found in Spodoptera frugiperda (Fall armyworm).